Here is a 259-residue protein sequence, read N- to C-terminus: 3-deoxy-manno-octulosonate cytidylyltransferase (259 aa).

It belongs to the KdsB family.

It is found in the cytoplasm. It carries out the reaction 3-deoxy-alpha-D-manno-oct-2-ulosonate + CTP = CMP-3-deoxy-beta-D-manno-octulosonate + diphosphate. Its pathway is nucleotide-sugar biosynthesis; CMP-3-deoxy-D-manno-octulosonate biosynthesis; CMP-3-deoxy-D-manno-octulosonate from 3-deoxy-D-manno-octulosonate and CTP: step 1/1. It participates in bacterial outer membrane biogenesis; lipopolysaccharide biosynthesis. Activates KDO (a required 8-carbon sugar) for incorporation into bacterial lipopolysaccharide in Gram-negative bacteria. In Xanthomonas oryzae pv. oryzae (strain KACC10331 / KXO85), this protein is 3-deoxy-manno-octulosonate cytidylyltransferase.